A 292-amino-acid chain; its full sequence is NAD kinase (292 aa).

Catalysis depends on Asp-64, which acts as the Proton acceptor. NAD(+)-binding positions include Asp-64–Gly-65, Asn-138–Asp-139, Arg-149, Arg-166, Asp-168, Thr-179–Ser-184, and Gln-238.

This sequence belongs to the NAD kinase family. A divalent metal cation is required as a cofactor.

The protein resides in the cytoplasm. The enzyme catalyses NAD(+) + ATP = ADP + NADP(+) + H(+). In terms of biological role, involved in the regulation of the intracellular balance of NAD and NADP, and is a key enzyme in the biosynthesis of NADP. Catalyzes specifically the phosphorylation on 2'-hydroxyl of the adenosine moiety of NAD to yield NADP. The chain is NAD kinase from Oleidesulfovibrio alaskensis (strain ATCC BAA-1058 / DSM 17464 / G20) (Desulfovibrio alaskensis).